The following is a 227-amino-acid chain: uncharacterized protein (227 aa).

Residues 7-26 (IITLTILIFISGLLTAFLLL) traverse the membrane as a helical segment.

The protein localises to the membrane. This is an uncharacterized protein from Haemophilus influenzae (strain ATCC 51907 / DSM 11121 / KW20 / Rd).